The sequence spans 156 residues: MQTSKNQDELVKTFKSILKEERFGSQSEIVVALQGEGFSNINQSKVSRMLSKFGAVRTRNAKQQMVYCLPAELGVPTAGSPLKNLVLDVDHNQSMIVVRTSPGAAQLIARLLDSIGKPEGILGTIAGDDTIFISPSNIQQIEDTLETVKSLFNYTD.

The protein belongs to the ArgR family.

The protein localises to the cytoplasm. Its pathway is amino-acid biosynthesis; L-arginine biosynthesis [regulation]. In terms of biological role, regulates arginine biosynthesis genes. In Shewanella piezotolerans (strain WP3 / JCM 13877), this protein is Arginine repressor.